A 570-amino-acid chain; its full sequence is MTQKHPQTLVVDAPLSDAERLKRESNFLRGTIAEDLNDGLTGGFNGDNSTLIRFHGMYQQDDRDIRAERAEEKLEPRYAMMLRCRLPGGIISPEQWLKMDSFASEKTLYGSIRLTNRQTFQFHGILKKDLKTVHHLLHESGLDSLATANDVNRNVLCTSNPVESDLHAEAYEWAKKISEHLLPQTHAYAEIWLDQEKLATTDQEPILGATYLPRKFKTTVVIPPQNDVDIYANDLNFIAISENDQLVGFNVLIGGGLSITIGDKTTHPGVAKDIGYIEKEKVLAVAEAVVTTQRDWGNRSNRKNARLRYTLERVGLDVFKAEVEKRAGVTFEASRPFTLTGRGDRFGWVKGIDNQWHLTLFVENGRLLDYPHRPLKSGIAEIAKVHKGDFRLTANQNLIVAGVSEEDKDTIEKIARDHGLLENISELRKNSMACVSFPTCPLAMAEAERFLPNFLTKVEAVMTKYDIADEYIVFRTTGCPNNCGRSLLAEIGLVGRAIGRYNLYIGGDRVGTRIPRLFRENITEDEILSEVDSLIGRWAKERDGKEAFGDFVVRAGIVKAVTDPAIDFYD.

[4Fe-4S] cluster contacts are provided by C434, C440, C479, and C483. C483 provides a ligand contact to siroheme.

The protein belongs to the nitrite and sulfite reductase 4Fe-4S domain family. As to quaternary structure, alpha(8)-beta(8). The alpha component is a flavoprotein, the beta component is a hemoprotein. Siroheme serves as cofactor. Requires [4Fe-4S] cluster as cofactor.

It catalyses the reaction hydrogen sulfide + 3 NADP(+) + 3 H2O = sulfite + 3 NADPH + 4 H(+). It functions in the pathway sulfur metabolism; hydrogen sulfide biosynthesis; hydrogen sulfide from sulfite (NADPH route): step 1/1. In terms of biological role, component of the sulfite reductase complex that catalyzes the 6-electron reduction of sulfite to sulfide. This is one of several activities required for the biosynthesis of L-cysteine from sulfate. This Zymomonas mobilis subsp. mobilis (strain ATCC 31821 / ZM4 / CP4) protein is Sulfite reductase [NADPH] hemoprotein beta-component.